A 358-amino-acid polypeptide reads, in one-letter code: tRNA(Ile)-lysidine synthase (358 aa).

35-40 contributes to the ATP binding site; the sequence is SGGPDS.

This sequence belongs to the tRNA(Ile)-lysidine synthase family.

The protein localises to the cytoplasm. The enzyme catalyses cytidine(34) in tRNA(Ile2) + L-lysine + ATP = lysidine(34) in tRNA(Ile2) + AMP + diphosphate + H(+). In terms of biological role, ligates lysine onto the cytidine present at position 34 of the AUA codon-specific tRNA(Ile) that contains the anticodon CAU, in an ATP-dependent manner. Cytidine is converted to lysidine, thus changing the amino acid specificity of the tRNA from methionine to isoleucine. This chain is tRNA(Ile)-lysidine synthase, found in Bradyrhizobium sp. (strain BTAi1 / ATCC BAA-1182).